The sequence spans 225 residues: DnaA regulatory inactivator Hda (225 aa).

The protein belongs to the DnaA family. HdA subfamily. As to quaternary structure, the active form seems to be an ADP-bound monomer. Forms the RIDA complex (regulatory inactivation of DnaA) of ATP-DnaA, ADP-Hda and the DNA-loaded beta sliding clamp (dnaN).

Its function is as follows. Mediates the interaction of DNA replication initiator protein DnaA with DNA polymerase subunit beta sliding clamp (dnaN). Stimulates hydrolysis of ATP-DnaA to ADP-DnaA, rendering DnaA inactive for reinitiation, a process called regulatory inhibition of DnaA or RIDA. This is DnaA regulatory inactivator Hda from Klebsiella pneumoniae (strain 342).